We begin with the raw amino-acid sequence, 647 residues long: MYMIQLTFPDGAVKEFEAGVTAEDVAGSISPGLRKKAIAAKLDGELIDYRRPIEHDGKIELVMPDSEDGLDLMRHSSAHLMAQAIKRLYGEDNNIYLGIGPTIENGFYYDIEMDRRINEEDLPEIEKMMKRIVDENLEITREVVSRDEALARYKELGDPLKIELIEDIPADQTLTIYHQGEFFDLCRGPHVPSTSKLKIFKLMSVAGAYWRGDSDNKMLQRIYGTAWATKEQLAEHLRLLEEAKERDHRKLGKELDLFFVSQEVGQGLPMWLPKGASIRRTVERYIVDKELELGYQHVYTPVLGSVDLYKTSGHWDHYQDDMFPKMEMDNEELVLRPMNCPHHMTIYKHEPRSYRELPLRIAELGGMHRYEMSGALTGLQRVRYMVLNDGHTFVTPEQMKQEFKDIVHLIQEVYADFGIKDYRFRLSYRDPADKEKYFDNDAIWEMAQSQLKETMDELELPYFEAEGEAAFYGPKLDVQVRTALGKEETLSTVQLDFLLPERFDLTYTGPDGKDHRPIVLHRGVVSTMERFVAYLIEEYKGAFPTWLAPVQVKLIPVSHVHDEYVAEVKAELVKRGVRVETDLRDEKLGYKIREAQMKKIPMTLVLGDKERDERAVNIRRYGQQEQVSASLDEFIASLTDEIANRSR.

The TGS domain maps to 1–63 (MYMIQLTFPD…EHDGKIELVM (63 aa)). Residues 247 to 544 (DHRKLGKELD…LIEEYKGAFP (298 aa)) form a catalytic region. Positions 340, 391, and 521 each coordinate Zn(2+).

It belongs to the class-II aminoacyl-tRNA synthetase family. In terms of assembly, homodimer. The cofactor is Zn(2+).

It localises to the cytoplasm. The catalysed reaction is tRNA(Thr) + L-threonine + ATP = L-threonyl-tRNA(Thr) + AMP + diphosphate + H(+). Functionally, catalyzes the attachment of threonine to tRNA(Thr) in a two-step reaction: L-threonine is first activated by ATP to form Thr-AMP and then transferred to the acceptor end of tRNA(Thr). Also edits incorrectly charged L-seryl-tRNA(Thr). This is Threonine--tRNA ligase from Exiguobacterium sp. (strain ATCC BAA-1283 / AT1b).